Reading from the N-terminus, the 582-residue chain is MSIETLLEAARFLEWQAQQQQRAREEQERLRLEQEREQEQKKANSLARLAHTLPVEEPRMEAPPLPLSPPAPPPAPPPPLATPAPLTVIPIPVVTNSPQPLPPPPPLPAAAQPLPLAPRQPALVGAPGLSIKEPAPLPSRPQVPTPAPLLPDSKATIPPNGSPKPLQPLPTPVLTIAPHPGVQPQLAPQQPPPPTLGTLKLAPAEEVKSSEQKKRPGGIGTREVHNKLEKNRRAHLKECFETLKRNIPNVDDKKTSNLSVLRTALRYIQSLKRKEKEYEHEMERLAREKIATQQRLAELKHELSQWMDVLEIDRVLRQTGQPEDDQASTSTASEGEDNIDEDMEEDRAGLGPPKLSHRPQPELLKSTLPPPSTTPAPLPPHPHPHPHSVALPPAHLPVQQQQPQQKTPLPAPPPPPAAPAQTLVPAPAHLVATAGGGSTVIAHTATTHASVIQTVNHVLQGPGGKHIAHIAPSAPSPAVQLAPATPPIGHITVHPATLNHVAHLGSQLPLYPQPVAVSHIAHTLSHQQVNGTAGLGPPATVMAKPAVGAQVVHHPQLVGQTVLNPVTMVTMPSFPVSTLKLA.

S2 is modified (N-acetylserine). A disordered region spans residues 18-224; that stretch reads QQQQRAREEQ…RPGGIGTREV (207 aa). Residues 22-42 show a composition bias toward basic and acidic residues; it reads RAREEQERLRLEQEREQEQKK. Composition is skewed to pro residues over residues 61–82 and 99–108; these read EAPP…PLAT and QPLPPPPPLP. Residues 109–123 show a composition bias toward low complexity; sequence AAAQPLPLAPRQPAL. Pro residues-rich tracts occupy residues 135-149 and 160-171; these read APLP…PAPL and NGSPKPLQPLPT. Residues 203–214 show a composition bias toward basic and acidic residues; it reads PAEEVKSSEQKK. One can recognise a bHLH domain in the interval 220–271; sequence GTREVHNKLEKNRRAHLKECFETLKRNIPNVDDKKTSNLSVLRTALRYIQSL. Residues 271-299 form a leucine-zipper region; the sequence is LKRKEKEYEHEMERLAREKIATQQRLAEL. The interval 319-422 is disordered; it reads TGQPEDDQAS…PPPPAAPAQT (104 aa). The span at 334 to 345 shows a compositional bias: acidic residues; sequence EGEDNIDEDMEE. Residues 368–381 are compositionally biased toward pro residues; it reads LPPPSTTPAPLPPH. Low complexity predominate over residues 387-408; that stretch reads HSVALPPAHLPVQQQQPQQKTP. The segment covering 409-418 has biased composition (pro residues); it reads LPAPPPPPAA.

In terms of assembly, efficient DNA binding requires dimerization with another bHLH protein. Binds DNA as a homodimer or a heterodimer with MAX.

It is found in the nucleus. Its function is as follows. Binds DNA as a heterodimer with MAX and represses transcription. Binds to the canonical E box sequence 5'-CACGTG-3' and, with higher affinity, to 5'-CACGCG-3'. The polypeptide is Max-binding protein MNT (MNT) (Homo sapiens (Human)).